The sequence spans 339 residues: Protein H339R (339 aa).

This sequence belongs to the asfivirus H339R family. In terms of assembly, interacts with NACA (alpha chain of nascent polypeptide-associated complex).

It is found in the host cytoplasm. The protein resides in the host nucleus. Its subcellular location is the virion. The sequence is that of Protein H339R from Ornithodoros (relapsing fever ticks).